We begin with the raw amino-acid sequence, 487 residues long: Glutamate--tRNA ligase 2 (487 aa).

The 'HIGH' region motif lies at proline 24 to glycine 34. The short motif at lysine 258 to arginine 262 is the 'KMSKS' region element. Residue lysine 261 coordinates ATP.

This sequence belongs to the class-I aminoacyl-tRNA synthetase family. Glutamate--tRNA ligase type 1 subfamily. Monomer.

Its subcellular location is the cytoplasm. The catalysed reaction is tRNA(Glu) + L-glutamate + ATP = L-glutamyl-tRNA(Glu) + AMP + diphosphate. In terms of biological role, catalyzes the attachment of glutamate to tRNA(Glu) in a two-step reaction: glutamate is first activated by ATP to form Glu-AMP and then transferred to the acceptor end of tRNA(Glu). The sequence is that of Glutamate--tRNA ligase 2 from Novosphingobium aromaticivorans (strain ATCC 700278 / DSM 12444 / CCUG 56034 / CIP 105152 / NBRC 16084 / F199).